Consider the following 206-residue polypeptide: 2,3-bisphosphoglycerate-dependent phosphoglycerate mutase (206 aa).

Residues Arg9–Asn16, Thr22–Gly23, Arg61, Glu88–Tyr91, Lys99, Arg115–Arg116, and Gly159–Asn160 each bind substrate. The active-site Tele-phosphohistidine intermediate is His10. Glu88 serves as the catalytic Proton donor/acceptor.

The protein belongs to the phosphoglycerate mutase family. BPG-dependent PGAM subfamily. Homodimer.

It carries out the reaction (2R)-2-phosphoglycerate = (2R)-3-phosphoglycerate. It participates in carbohydrate degradation; glycolysis; pyruvate from D-glyceraldehyde 3-phosphate: step 3/5. Its function is as follows. Catalyzes the interconversion of 2-phosphoglycerate and 3-phosphoglycerate. This Bartonella tribocorum (strain CIP 105476 / IBS 506) protein is 2,3-bisphosphoglycerate-dependent phosphoglycerate mutase.